Here is a 157-residue protein sequence, read N- to C-terminus: NADPH-dependent 7-cyano-7-deazaguanine reductase (157 aa).

Catalysis depends on C55, which acts as the Thioimide intermediate. The active-site Proton donor is D62. Residues 77–79 and 96–97 each bind substrate; these read VES and HE.

It belongs to the GTP cyclohydrolase I family. QueF type 1 subfamily.

Its subcellular location is the cytoplasm. It catalyses the reaction 7-aminomethyl-7-carbaguanine + 2 NADP(+) = 7-cyano-7-deazaguanine + 2 NADPH + 3 H(+). The protein operates within tRNA modification; tRNA-queuosine biosynthesis. Functionally, catalyzes the NADPH-dependent reduction of 7-cyano-7-deazaguanine (preQ0) to 7-aminomethyl-7-deazaguanine (preQ1). The sequence is that of NADPH-dependent 7-cyano-7-deazaguanine reductase from Neisseria meningitidis serogroup B (strain ATCC BAA-335 / MC58).